Consider the following 234-residue polypeptide: Large ribosomal subunit protein uL1 (234 aa).

The protein belongs to the universal ribosomal protein uL1 family. In terms of assembly, part of the 50S ribosomal subunit.

Its function is as follows. Binds directly to 23S rRNA. The L1 stalk is quite mobile in the ribosome, and is involved in E site tRNA release. In terms of biological role, protein L1 is also a translational repressor protein, it controls the translation of the L11 operon by binding to its mRNA. This is Large ribosomal subunit protein uL1 from Geobacter metallireducens (strain ATCC 53774 / DSM 7210 / GS-15).